Consider the following 750-residue polypeptide: Cullin-5 (750 aa).

In terms of domain architecture, Cullin neddylation spans 678-739; the sequence is RFFKLQAAIV…QEYIRRTTDD (62 aa). A Glycyl lysine isopeptide (Lys-Gly) (interchain with G-Cter in NEDD8) cross-link involves residue K691.

The protein belongs to the cullin family. Neddylated; which enhances the ubiquitination activity of SCF-like complex.

Its pathway is protein modification; protein ubiquitination. Its function is as follows. Probable core component of cullin-based SCF-like E3 ubiquitin-protein ligase complexes which mediate the ubiquitination and subsequent proteasomal degradation of target proteins. The E3 ubiquitin-protein ligase activity of the complex is dependent on the neddylation of the cullin subunit. This Dictyostelium discoideum (Social amoeba) protein is Cullin-5 (culE).